The following is a 330-amino-acid chain: Mycothiol acetyltransferase (330 aa).

N-acetyltransferase domains follow at residues 5-142 and 171-328; these read LVTD…MPLR and VRLR…APRP. E36 is a binding site for 1D-myo-inositol 2-(L-cysteinylamino)-2-deoxy-alpha-D-glucopyranoside. 80–82 contributes to the acetyl-CoA binding site; it reads VVV. Residues 142 to 161 form a disordered region; that stretch reads RDIAGDEPGGPWEAPELPEP. 1D-myo-inositol 2-(L-cysteinylamino)-2-deoxy-alpha-D-glucopyranoside contacts are provided by E198, K238, and E254. Acetyl-CoA is bound by residues 258–260 and 265–271; these read VGV and QGSGLGR. Position 292 (Y292) interacts with 1D-myo-inositol 2-(L-cysteinylamino)-2-deoxy-alpha-D-glucopyranoside. Residue 297–302 coordinates acetyl-CoA; sequence NEAAVR.

It belongs to the acetyltransferase family. MshD subfamily. In terms of assembly, monomer.

The enzyme catalyses 1D-myo-inositol 2-(L-cysteinylamino)-2-deoxy-alpha-D-glucopyranoside + acetyl-CoA = mycothiol + CoA + H(+). Its function is as follows. Catalyzes the transfer of acetyl from acetyl-CoA to desacetylmycothiol (Cys-GlcN-Ins) to form mycothiol. The polypeptide is Mycothiol acetyltransferase (Nocardiopsis dassonvillei (strain ATCC 23218 / DSM 43111 / CIP 107115 / JCM 7437 / KCTC 9190 / NBRC 14626 / NCTC 10488 / NRRL B-5397 / IMRU 509) (Actinomadura dassonvillei)).